Reading from the N-terminus, the 337-residue chain is Ketol-acid reductoisomerase (NADP(+)) (337 aa).

Residues 3–183 form the KARI N-terminal Rossmann domain; that stretch reads LEMFYDDDAD…GGTRAGVIKT (181 aa). NADP(+)-binding positions include 26-29, K49, S52, S54, and 84-87; these read YGSQ and DTAQ. H109 is an active-site residue. G135 is a binding site for NADP(+). Positions 184–329 constitute a KARI C-terminal knotted domain; sequence TFKDETETDL…KKLRDLMSWV (146 aa). Residues D192, E196, E228, and E232 each contribute to the Mg(2+) site. Substrate is bound at residue S253.

It belongs to the ketol-acid reductoisomerase family. Requires Mg(2+) as cofactor.

The catalysed reaction is (2R)-2,3-dihydroxy-3-methylbutanoate + NADP(+) = (2S)-2-acetolactate + NADPH + H(+). The enzyme catalyses (2R,3R)-2,3-dihydroxy-3-methylpentanoate + NADP(+) = (S)-2-ethyl-2-hydroxy-3-oxobutanoate + NADPH + H(+). The protein operates within amino-acid biosynthesis; L-isoleucine biosynthesis; L-isoleucine from 2-oxobutanoate: step 2/4. It participates in amino-acid biosynthesis; L-valine biosynthesis; L-valine from pyruvate: step 2/4. Functionally, involved in the biosynthesis of branched-chain amino acids (BCAA). Catalyzes an alkyl-migration followed by a ketol-acid reduction of (S)-2-acetolactate (S2AL) to yield (R)-2,3-dihydroxy-isovalerate. In the isomerase reaction, S2AL is rearranged via a Mg-dependent methyl migration to produce 3-hydroxy-3-methyl-2-ketobutyrate (HMKB). In the reductase reaction, this 2-ketoacid undergoes a metal-dependent reduction by NADPH to yield (R)-2,3-dihydroxy-isovalerate. In Mycobacterium bovis (strain BCG / Pasteur 1173P2), this protein is Ketol-acid reductoisomerase (NADP(+)).